A 396-amino-acid polypeptide reads, in one-letter code: 8-amino-7-oxononanoate synthase (396 aa).

Residue arginine 21 participates in substrate binding. Residue 112 to 113 participates in pyridoxal 5'-phosphate binding; that stretch reads GY. Histidine 137 is a substrate binding site. The pyridoxal 5'-phosphate site is built by serine 183, histidine 211, and threonine 239. Lysine 242 is modified (N6-(pyridoxal phosphate)lysine). Position 358 (threonine 358) interacts with substrate.

The protein belongs to the class-II pyridoxal-phosphate-dependent aminotransferase family. BioF subfamily. Homodimer. Pyridoxal 5'-phosphate is required as a cofactor.

It carries out the reaction 6-carboxyhexanoyl-[ACP] + L-alanine + H(+) = (8S)-8-amino-7-oxononanoate + holo-[ACP] + CO2. The protein operates within cofactor biosynthesis; biotin biosynthesis. Catalyzes the decarboxylative condensation of pimeloyl-[acyl-carrier protein] and L-alanine to produce 8-amino-7-oxononanoate (AON), [acyl-carrier protein], and carbon dioxide. This is 8-amino-7-oxononanoate synthase from Bordetella petrii (strain ATCC BAA-461 / DSM 12804 / CCUG 43448).